A 411-amino-acid polypeptide reads, in one-letter code: Ornithine cyclodeaminase (411 aa).

Asn-236, Ala-237, Asp-315, Thr-347, Met-348, Leu-349, His-350, Asp-368, Asp-391, and Val-392 together coordinate NAD(+).

Belongs to the AgrE/ArgZ ornithine cyclodeaminase family. It depends on NAD(+) as a cofactor.

It catalyses the reaction L-ornithine = L-proline + NH4(+). Its function is as follows. Catalyzes the conversion of ornithine to proline, with the release of ammonia. This is Ornithine cyclodeaminase from Methanothermobacter thermautotrophicus (strain ATCC 29096 / DSM 1053 / JCM 10044 / NBRC 100330 / Delta H) (Methanobacterium thermoautotrophicum).